Consider the following 370-residue polypeptide: DNA replication and repair protein RecF (370 aa).

30 to 37 is an ATP binding site; it reads GENAQGKT.

This sequence belongs to the RecF family.

The protein localises to the cytoplasm. The RecF protein is involved in DNA metabolism; it is required for DNA replication and normal SOS inducibility. RecF binds preferentially to single-stranded, linear DNA. It also seems to bind ATP. The chain is DNA replication and repair protein RecF from Staphylococcus aureus (strain bovine RF122 / ET3-1).